Here is a 102-residue protein sequence, read N- to C-terminus: Small ribosomal subunit protein uS10 (102 aa).

Belongs to the universal ribosomal protein uS10 family. In terms of assembly, part of the 30S ribosomal subunit.

Its function is as follows. Involved in the binding of tRNA to the ribosomes. The protein is Small ribosomal subunit protein uS10 of Sulfurisphaera tokodaii (strain DSM 16993 / JCM 10545 / NBRC 100140 / 7) (Sulfolobus tokodaii).